We begin with the raw amino-acid sequence, 211 residues long: Transcriptional regulator NarO (211 aa).

One can recognise an HTH bat-type domain in the interval 154–205; that stretch reads LTARQREVLETAHEMGYFEHPREANATEVAAALDINRSTFTEHLSAAQSKLL.

Its function is as follows. Activates transcription of the denitrifying genes (nitrate reductase narA and nitrite reductase nirK) under anaerobic conditions. This chain is Transcriptional regulator NarO, found in Haloferax volcanii (strain ATCC 29605 / DSM 3757 / JCM 8879 / NBRC 14742 / NCIMB 2012 / VKM B-1768 / DS2) (Halobacterium volcanii).